Here is a 468-residue protein sequence, read N- to C-terminus: Acetyl-CoA decarbonylase/synthase complex subunit gamma (468 aa).

Positions 1–60 (MKINSPLEAYKYLPQTNCGECGEATCMAFASKLIDRSGKTSDCPPLIKEKKFAKKLAELD) constitute a 4Fe-4S domain. Residues Cys-18, Cys-21, Cys-26, and Cys-43 each contribute to the [4Fe-4S] cluster site.

In terms of assembly, heterodimer of delta and gamma chains. The ACDS complex is made up of alpha, epsilon, beta, gamma and delta chains with a probable stoichiometry of (alpha(2)epsilon(2))(4)-beta(8)-(gamma(1)delta(1))(8). Corrinoid is required as a cofactor. [4Fe-4S] cluster serves as cofactor.

The catalysed reaction is 5,6,7,8-tetrahydrosarcinapterin + methyl-Co(III)-[corrinoid Fe-S protein] = 5-methyltetrahydrosarcinapterin + Co(I)-[corrinoid Fe-S protein] + H(+). It participates in one-carbon metabolism; methanogenesis from acetate. Functionally, part of a complex that catalyzes the reversible cleavage of acetyl-CoA, allowing growth on acetate as sole source of carbon and energy. This Methanosarcina acetivorans (strain ATCC 35395 / DSM 2834 / JCM 12185 / C2A) protein is Acetyl-CoA decarbonylase/synthase complex subunit gamma.